The chain runs to 437 residues: Na(+)/H(+) antiporter NhaA (437 aa).

11 consecutive transmembrane segments (helical) span residues 12 to 32 (SMNI…AVIA), 65 to 85 (LTMI…MVGL), 103 to 123 (ALPF…YSMV), 133 to 153 (GLAI…SLLG), 162 to 182 (IFLT…IAIF), 186 to 206 (HVAY…YFIG), 214 to 234 (IFFL…GIHS), 308 to 328 (GAVN…VMFS), 333 to 353 (VIGG…FLGI), 377 to 397 (ISGV…IANL), and 412 to 432 (LGVL…LHWV).

It belongs to the NhaA Na(+)/H(+) (TC 2.A.33) antiporter family.

Its subcellular location is the cell inner membrane. It catalyses the reaction Na(+)(in) + 2 H(+)(out) = Na(+)(out) + 2 H(+)(in). In terms of biological role, na(+)/H(+) antiporter that extrudes sodium in exchange for external protons. The polypeptide is Na(+)/H(+) antiporter NhaA (Bacteroides fragilis (strain YCH46)).